Consider the following 764-residue polypeptide: MRPGSLLLLVLLLALSRSLRGKECASPPCECHQEDDFRVTCKELHRIPSLPPSTQTLKLIETHLKTIPSLAFSSLPNISRIYLSIDATLQRLEPHSFYNLSKMTHIEIRNTRSLTYIDPDALTELPLLKFLGIFNTGLRIFPDLTKIYSTDIFFILEITDNPYMTSVPENAFQGLCNETLTLKLYNNGFTSVQGHAFNGTKLDAVYLNKNKYLTAIDNDAFGGVYSGPTLLDVSSTSVTALPSKGLEHLKELIAKDTWTLKKLPLSLSFLHLTRADLSYPSHCCAFKNQKKIRGILESLMCNESSIRNLRQRKSVNILRGPIYQEYEEDPGDNSVGYKQNSKFQESPSNSHYYVFFEEQEDEVVGFGQELKNPQEETLQAFESHYDYTVCGDNEDMVCTPKSDEFNPCEDIMGYRFLRIVVWFVSLLALLGNIFVLLILLTSHYKLTVPRFLMCNLAFADFCMGVYLLLIASVDLYTHSEYYNHAIDWQTGPGCNTAGFFTVFASELSVYTLTVITLERWYAITFAMRLDRKIRLRHAYTIMAGGWVSCFLLALLPMVGISSYAKVSICLPMDTDTPLALAYIVLVLLLNVVAFVVVCSCYVKIYITVRNPQYNPRDKDTKIAKRMAVLIFTDFMCMAPISFYALSALMNKPLITVTNSKILLVLFYPLNSCANPFLYAIFTKAFQRDVFILLSKFGICKRQAQAYQGQRVCPNNSTGIQIQKIPQDTRQSLPNMQDTYELLGNSQLAPKLQGQISEEYKQTAL.

The N-terminal stretch at 1–21 (MRPGSLLLLVLLLALSRSLRG) is a signal peptide. Residues 22-413 (KECASPPCEC…EFNPCEDIMG (392 aa)) are Extracellular-facing. A disulfide bridge connects residues cysteine 31 and cysteine 41. 2 N-linked (GlcNAc...) asparagine glycosylation sites follow: asparagine 77 and asparagine 99. 7 LRR repeats span residues 100 to 124 (LSKM…ALTE), 125 to 150 (LPLL…IYST), 151 to 174 (DIFF…AFQG), 176 to 199 (CNET…AFNG), 200 to 223 (TKLD…AFGG), 225 to 248 (YSGP…GLEH), and 264 to 288 (PLSL…AFKN). 2 N-linked (GlcNAc...) asparagine glycosylation sites follow: asparagine 177 and asparagine 198. The N-linked (GlcNAc...) asparagine glycan is linked to asparagine 302. At tyrosine 385 the chain carries Sulfotyrosine. The chain crosses the membrane as a helical span at residues 414 to 441 (YRFLRIVVWFVSLLALLGNIFVLLILLT). Residues 442–450 (SHYKLTVPR) are Cytoplasmic-facing. Residues 451 to 473 (FLMCNLAFADFCMGVYLLLIASV) form a helical membrane-spanning segment. Residues 474–494 (DLYTHSEYYNHAIDWQTGPGC) lie on the Extracellular side of the membrane. Cysteine 494 and cysteine 569 form a disulfide bridge. Residues 495–517 (NTAGFFTVFASELSVYTLTVITL) form a helical membrane-spanning segment. At 518–537 (ERWYAITFAMRLDRKIRLRH) the chain is on the cytoplasmic side. Residues 538 to 560 (AYTIMAGGWVSCFLLALLPMVGI) form a helical membrane-spanning segment. The Extracellular portion of the chain corresponds to 561–580 (SSYAKVSICLPMDTDTPLAL). The chain crosses the membrane as a helical span at residues 581–602 (AYIVLVLLLNVVAFVVVCSCYV). At 603 to 625 (KIYITVRNPQYNPRDKDTKIAKR) the chain is on the cytoplasmic side. Residues 626 to 649 (MAVLIFTDFMCMAPISFYALSALM) form a helical membrane-spanning segment. Over 650–660 (NKPLITVTNSK) the chain is Extracellular. Residues 661-682 (ILLVLFYPLNSCANPFLYAIFT) traverse the membrane as a helical segment. Topologically, residues 683 to 764 (KAFQRDVFIL…ISEEYKQTAL (82 aa)) are cytoplasmic. The PDZ-binding signature appears at 762–764 (TAL).

Belongs to the G-protein coupled receptor 1 family. FSH/LSH/TSH subfamily. As to quaternary structure, interacts with heterodimer GPHA2:GPHB5; this interaction stimulates cAMP production. Interacts (via the PDZ-binding motif) with SCRIB; regulates TSHR trafficking and function. In terms of processing, glycosylated. Sulfated. Sulfation on Tyr-385 plays a role in thyrotropin receptor binding and activation.

Its subcellular location is the cell membrane. The protein localises to the basolateral cell membrane. Receptor for the thyroid-stimulating hormone (TSH) or thyrotropin. Also acts as a receptor for the heterodimeric glycoprotein hormone (GPHA2:GPHB5) or thyrostimulin. The activity of this receptor is mediated by G proteins which activate adenylate cyclase. Plays a central role in controlling thyroid cell metabolism. The protein is Thyrotropin receptor (Tshr) of Mus musculus (Mouse).